The following is a 73-amino-acid chain: Mating-type pheromone BBP1(3) (73 aa).

A disordered region spans residues 1–41 (MASSVLARPGPSTVLPAMTRPPPPMAHRAAATPSFARSSQP). Cysteine 70 carries the post-translational modification Cysteine methyl ester. Residue cysteine 70 is the site of S-farnesyl cysteine attachment. The propeptide at 71 to 73 (VVA) is removed in mature form.

It localises to the cell membrane. Activates B-regulated development. The polypeptide is Mating-type pheromone BBP1(3) (BBP1(3)) (Schizophyllum commune (Split gill fungus)).